The following is a 1251-amino-acid chain: Immunoglobulin-like and fibronectin type III domain-containing protein 1 (1251 aa).

In terms of domain architecture, Ig-like 1 spans 29-119 (PDFEQKPVTS…GEAACSVRLT (91 aa)). Residues 61–81 (RWQNSKGDLSDSSKYKISSSP) form a disordered region. Residues 188-221 (IVDYRGMLRRLQEMKKEQEDKMAQYINTISSLRH) are a coiled coil. Positions 309-398 (PRVVVPLAET…SSAWLVVEAG (90 aa)) constitute an Ig-like 2 domain. Positions 403–433 (LQSTSADHKLQSRRSGKDGRLDIYGERRDAT) are enriched in basic and acidic residues. The disordered stretch occupies residues 403-454 (LQSTSADHKLQSRRSGKDGRLDIYGERRDATRSSTSRYKPGTGSFSKDAQGP). Positions 434–449 (RSSTSRYKPGTGSFSK) are enriched in polar residues. The region spanning 454–539 (PMGHFSQGLA…GDQQSEATLT (86 aa)) is the Ig-like 3 domain. Fibronectin type-III domains follow at residues 646 to 741 (PPQG…VAPE), 746 to 845 (APSA…MRPP), and 847 to 942 (LVRN…AMPV). An Ig-like 4 domain is found at 946-1030 (PKFLVDSSTK…LRTLQGKEVA (85 aa)). Positions 1043 to 1137 (APGPIHLQEN…TSQPWCIPRQ (95 aa)) constitute a Fibronectin type-III 4 domain. The Ig-like 5 domain occupies 1151 to 1245 (PDLSQKPRFL…GQAVSTATLI (95 aa)).

Interacts with FLNC. Interacts with KY. As to expression, expressed in skeletal muscle.

The protein resides in the nucleus. Its subcellular location is the cytoplasm. It localises to the myofibril. It is found in the sarcomere. The protein localises to the z line. This chain is Immunoglobulin-like and fibronectin type III domain-containing protein 1 (IGFN1), found in Homo sapiens (Human).